The following is a 448-amino-acid chain: Beta-glucosidase B (448 aa).

The Proton donor role is filled by E167. The active-site Nucleophile is E356.

It belongs to the glycosyl hydrolase 1 family.

It carries out the reaction Hydrolysis of terminal, non-reducing beta-D-glucosyl residues with release of beta-D-glucose.. In Paenibacillus polymyxa (Bacillus polymyxa), this protein is Beta-glucosidase B (bglB).